A 346-amino-acid chain; its full sequence is NADP-dependent alcohol dehydrogenase C (346 aa).

Zn(2+)-binding residues include cysteine 41, histidine 63, cysteine 94, cysteine 97, cysteine 100, cysteine 108, and cysteine 158.

It belongs to the zinc-containing alcohol dehydrogenase family. Zn(2+) serves as cofactor.

The catalysed reaction is a primary alcohol + NADP(+) = an aldehyde + NADPH + H(+). The polypeptide is NADP-dependent alcohol dehydrogenase C (adhC) (Mycobacterium bovis (strain ATCC BAA-935 / AF2122/97)).